The sequence spans 76 residues: Omega-conotoxin-like TxO2 (76 aa).

The signal sequence occupies residues 1–22 (MKLTCVVIVAVLFLTAWTFVTA). Positions 23-52 (APHSSNALENLYLKAHHEMNNPEDSELNKR) are excised as a propeptide. Cystine bridges form between Cys53/Cys67, Cys60/Cys71, and Cys66/Cys75.

It belongs to the conotoxin O1 superfamily. Expressed by the venom duct.

It localises to the secreted. Functionally, omega-conotoxins act at presynaptic membranes, they bind and block voltage-gated calcium channels (Cav). This is Omega-conotoxin-like TxO2 from Conus textile (Cloth-of-gold cone).